The sequence spans 195 residues: FMN-dependent NADH:quinone oxidoreductase (195 aa).

Residues Ser10, 16-18, 91-94, and 135-138 contribute to the FMN site; these read SQS, MYNF, and TRGG.

This sequence belongs to the azoreductase type 1 family. Homodimer. FMN serves as cofactor.

It catalyses the reaction 2 a quinone + NADH + H(+) = 2 a 1,4-benzosemiquinone + NAD(+). It carries out the reaction N,N-dimethyl-1,4-phenylenediamine + anthranilate + 2 NAD(+) = 2-(4-dimethylaminophenyl)diazenylbenzoate + 2 NADH + 2 H(+). Functionally, quinone reductase that provides resistance to thiol-specific stress caused by electrophilic quinones. Also exhibits azoreductase activity. Catalyzes the reductive cleavage of the azo bond in aromatic azo compounds to the corresponding amines. The sequence is that of FMN-dependent NADH:quinone oxidoreductase from Vibrio vulnificus (strain YJ016).